Reading from the N-terminus, the 291-residue chain is Pyridoxal 5'-phosphate synthase subunit PdxS (291 aa).

Residue Asp23 coordinates D-ribose 5-phosphate. Catalysis depends on Lys80, which acts as the Schiff-base intermediate with D-ribose 5-phosphate. Residue Gly152 coordinates D-ribose 5-phosphate. Arg164 is a binding site for D-glyceraldehyde 3-phosphate. D-ribose 5-phosphate is bound by residues Gly213 and 234 to 235 (GS).

It belongs to the PdxS/SNZ family. In the presence of PdxT, forms a dodecamer of heterodimers.

It catalyses the reaction aldehydo-D-ribose 5-phosphate + D-glyceraldehyde 3-phosphate + L-glutamine = pyridoxal 5'-phosphate + L-glutamate + phosphate + 3 H2O + H(+). The protein operates within cofactor biosynthesis; pyridoxal 5'-phosphate biosynthesis. Catalyzes the formation of pyridoxal 5'-phosphate from ribose 5-phosphate (RBP), glyceraldehyde 3-phosphate (G3P) and ammonia. The ammonia is provided by the PdxT subunit. Can also use ribulose 5-phosphate and dihydroxyacetone phosphate as substrates, resulting from enzyme-catalyzed isomerization of RBP and G3P, respectively. The protein is Pyridoxal 5'-phosphate synthase subunit PdxS of Haemophilus influenzae (strain ATCC 51907 / DSM 11121 / KW20 / Rd).